The following is a 639-amino-acid chain: C-type lectin domain-containing protein 160 (639 aa).

Positions Met1–Thr19 are cleaved as a signal peptide. VWFA domains follow at residues Asp31–Gly178 and Asp289–Val474. The region spanning Lys491–Tyr618 is the C-type lectin domain. A disulfide bridge links Cys594 with Cys614.

The protein localises to the secreted. The polypeptide is C-type lectin domain-containing protein 160 (clec-160) (Caenorhabditis elegans).